Consider the following 328-residue polypeptide: Sin3 histone deacetylase corepressor complex component SDS3 (328 aa).

Residues Met1–Tyr22 are compositionally biased toward low complexity. Positions Met1–Lys69 are disordered. Ser2 is modified (N-acetylserine). The interval Ser2–Leu170 is mediates interaction with USP17L2. 2 stretches are compositionally biased toward acidic residues: residues Tyr23–Glu37 and Ser45–Glu54. Ser32 and Ser45 each carry phosphoserine. Thr49 carries the phosphothreonine modification. Phosphoserine is present on Ser53. A compositionally biased stretch (basic and acidic residues) spans Asp56–Lys69. A coiled-coil region spans residues Val66–Thr171. Residues Lys69, Lys178, and Lys201 each participate in a glycyl lysine isopeptide (Lys-Gly) (interchain with G-Cter in SUMO2) cross-link. The interval Arg188 to Leu226 is sin3 interaction domain (SID). Residues Leu226–Arg252 form a disordered region. 3 positions are modified to phosphoserine: Ser228, Ser234, and Ser237. Residue Thr244 is modified to Phosphothreonine.

This sequence belongs to the SDS3 family. As to quaternary structure, interacts with HCFC1. Homodimer. Component of the SIN3 histone deacetylase (HDAC) corepressor complex. Interacts with SIN3A. Interaction with SIN3B enhances the interaction between SIN3B and HDAC1 to form a complex. Component of a mSin3A corepressor complex that contains SIN3A, SAP130, SUDS3/SAP45, ARID4B/SAP180, HDAC1 and HDAC2. Interacts with USP17L2; the interaction is direct. Interacts with FOXK2. Post-translationally, polyubiquitinated. 'Lys-63'-polyubiquitinated SUDS3 positively regulates histone deacetylation. Regulated through deubiquitination by USP17L2/USP17 that cleaves 'Lys-63'-linked ubiquitin chains. Expressed in all newborn tissues tested, including brain, kidney and liver.

The protein resides in the nucleus. Regulatory protein which represses transcription and augments histone deacetylase activity of HDAC1. May have a potential role in tumor suppressor pathways through regulation of apoptosis. May function in the assembly and/or enzymatic activity of the mSin3A corepressor complex or in mediating interactions between the complex and other regulatory complexes. The chain is Sin3 histone deacetylase corepressor complex component SDS3 (Suds3) from Mus musculus (Mouse).